The following is a 440-amino-acid chain: Streptokinase C (440 aa).

The first 26 residues, 1–26, serve as a signal peptide directing secretion; it reads MKNYLSFGMFALLFALTFGTVNSVQA.

In terms of biological role, this protein is not a protease, but it activates plasminogen by complexing with it. As a potential virulence factor, it is thought to prevent the formation of effective fibrin barriers around the site of infection, thereby contributing to the invasiveness of the cells. This chain is Streptokinase C (skc), found in Streptococcus dysgalactiae subsp. equisimilis (Streptococcus equisimilis).